A 94-amino-acid polypeptide reads, in one-letter code: MSRECELTGTKPMVGNIVSHSQIKTKRRYLPNLVQVTLRSEALDQNFRMRIAAKALRTVDKLGGLDAFLAKAKEEGLSTKALKIKRDIAKKAVA.

Belongs to the bacterial ribosomal protein bL28 family.

This is Large ribosomal subunit protein bL28 from Hyphomonas neptunium (strain ATCC 15444).